The following is a 249-amino-acid chain: Triosephosphate isomerase (249 aa).

Asn12 and Lys14 together coordinate substrate. Lys14 bears the N6-acetyllysine mark. Tyr68 carries the 3'-nitrotyrosine modification. Ser80 is modified (phosphoserine). His96 functions as the Electrophile in the catalytic mechanism. The residue at position 106 (Ser106) is a Phosphoserine. A Glycyl lysine isopeptide (Lys-Gly) (interchain with G-Cter in SUMO1) cross-link involves residue Lys142. Position 149 is an N6-succinyllysine (Lys149). An N6-acetyllysine; alternate modification is found at Lys156. Lys156 is modified (N6-succinyllysine; alternate). Ser159 carries the phosphoserine modification. Catalysis depends on Glu166, which acts as the Proton acceptor. Thr173 carries the post-translational modification Phosphothreonine. Residue Lys194 is modified to N6-acetyllysine; alternate. Lys194 carries the post-translational modification N6-succinyllysine; alternate. Lys194 carries the post-translational modification N6-methyllysine; alternate. At Ser198 the chain carries Phosphoserine. Tyr209 bears the 3'-nitrotyrosine mark. Residue Ser212 is modified to Phosphoserine. Phosphothreonine is present on Thr214. Ser223 carries the post-translational modification Phosphoserine. Lys238 carries the N6-acetyllysine modification.

The protein belongs to the triosephosphate isomerase family. Homodimer.

Its subcellular location is the cytoplasm. It carries out the reaction dihydroxyacetone phosphate = methylglyoxal + phosphate. It catalyses the reaction D-glyceraldehyde 3-phosphate = dihydroxyacetone phosphate. It participates in carbohydrate degradation; glycolysis; D-glyceraldehyde 3-phosphate from glycerone phosphate: step 1/1. Its pathway is carbohydrate biosynthesis; gluconeogenesis. In terms of biological role, triosephosphate isomerase is an extremely efficient metabolic enzyme that catalyzes the interconversion between dihydroxyacetone phosphate (DHAP) and D-glyceraldehyde-3-phosphate (G3P) in glycolysis and gluconeogenesis. It is also responsible for the non-negligible production of methylglyoxal a reactive cytotoxic side-product that modifies and can alter proteins, DNA and lipids. The sequence is that of Triosephosphate isomerase (TPI1) from Gorilla gorilla gorilla (Western lowland gorilla).